Consider the following 830-residue polypeptide: Dimethylglycine oxidase (830 aa).

Residues 14–15 (IV), 35–36 (DQ), 45–48 (STSH), Leu52, and Val174 each bind FAD. His48 bears the Pros-8alpha-FAD histidine mark. Residues His225 and Tyr259 contribute to the active site. FAD contacts are provided by residues Tyr259 and 360 to 363 (VWVT). Tyr539 contacts (6S)-5,6,7,8-tetrahydrofolate. The active-site For 5,10-methylenetetrahydrofolate synthesis activity is Asp552. Residues Thr554, Gly566, and 658–660 (ELY) each bind (6S)-5,6,7,8-tetrahydrofolate.

It belongs to the GcvT family. It depends on FAD as a cofactor.

The catalysed reaction is N,N-dimethylglycine + O2 + H2O = sarcosine + formaldehyde + H2O2. It carries out the reaction N,N-dimethylglycine + (6S)-5,6,7,8-tetrahydrofolate + O2 = sarcosine + (6R)-5,10-methylene-5,6,7,8-tetrahydrofolate + H2O2. Catalyzes the oxidative demethylation of N,N-dimethylglycine to yield sarcosine, formaldehyde and hydrogen peroxide. The oxidation of dimethylglycine is coupled to the synthesis of 5,10-methylenetetrahydrofolate through an unusual substrate channeling mechanism. This channeling occurs by nonbiased diffusion of the iminium intermediate through a large solvent cavity connecting active site 1 (N-terminus) and active site 2 (C-terminus). The synthesis of 5,10-methylenetetrahydrofolate (at active site 2) prevents the accumulation of formaldehyde, formed by hydrolysis of the iminium intermediate product (at active site 1). Does not oxidize sarcosine. This is Dimethylglycine oxidase (dmg) from Arthrobacter globiformis.